The following is a 536-amino-acid chain: Mannuronan C5-epimerase (536 aa).

Residues 1 to 36 (MNSHASNGRSRNWPHALLESALLTSALLMASSVALA) form the signal peptide. 5 PbH1 repeats span residues 298-320 (TRDF…DPHD), 322-345 (SHGL…IISR), 347-369 (VDNS…VLDR), 371-393 (SVGN…TLYE), and 394-416 (SGNN…RVRN). Histidine 319 acts as the Proton acceptor in catalysis.

It belongs to the D-mannuronate C5-epimerase family.

It is found in the periplasm. The enzyme catalyses [(1-&gt;4)-beta-D-mannuronosyl](n) = [alginate](n). Its pathway is glycan biosynthesis; alginate biosynthesis. In terms of biological role, catalyzes the epimerization of beta-D-mannuronate to alpha-L-guluronate during the synthesis of the linear polysaccharide alginate. In addition, is part of a periplasmic protein complex that protects alginate from degradation by AlgL by channeling the newly formed alginate polymer through a scaffold that transfers the alginate polymer through the periplasmic space to the outer membrane secretin AlgE. This is Mannuronan C5-epimerase (algG) from Pseudomonas syringae pv. tomato (strain ATCC BAA-871 / DC3000).